Here is a 78-residue protein sequence, read N- to C-terminus: RNA-binding protein Hfq (78 aa).

The 60-residue stretch at 10–69 (DPFLNTLRKEHVPVSIYLVNGIKLQGQIESFDQYVVLLRNTVTQMVYKHAISTVVPARAV) folds into the Sm domain.

It belongs to the Hfq family. As to quaternary structure, homohexamer.

RNA chaperone that binds small regulatory RNA (sRNAs) and mRNAs to facilitate mRNA translational regulation in response to envelope stress, environmental stress and changes in metabolite concentrations. Also binds with high specificity to tRNAs. The sequence is that of RNA-binding protein Hfq from Bordetella petrii (strain ATCC BAA-461 / DSM 12804 / CCUG 43448).